Reading from the N-terminus, the 442-residue chain is Glycoprotein endo-alpha-1,2-mannosidase-like protein (442 aa).

Residues Met1 to Ala8 lie on the Cytoplasmic side of the membrane. The helical; Signal-anchor for type II membrane protein transmembrane segment at Cys9 to Leu29 threads the bilayer. The Lumenal segment spans residues Lys30–Met442.

This sequence belongs to the glycosyl hydrolase 99 family.

It is found in the golgi apparatus membrane. The chain is Glycoprotein endo-alpha-1,2-mannosidase-like protein (maneal) from Danio rerio (Zebrafish).